Here is a 167-residue protein sequence, read N- to C-terminus: Large ribosomal subunit protein uL10 (167 aa).

It belongs to the universal ribosomal protein uL10 family. In terms of assembly, part of the ribosomal stalk of the 50S ribosomal subunit. The N-terminus interacts with L11 and the large rRNA to form the base of the stalk. The C-terminus forms an elongated spine to which L12 dimers bind in a sequential fashion forming a multimeric L10(L12)X complex.

Forms part of the ribosomal stalk, playing a central role in the interaction of the ribosome with GTP-bound translation factors. This chain is Large ribosomal subunit protein uL10, found in Alkaliphilus oremlandii (strain OhILAs) (Clostridium oremlandii (strain OhILAs)).